We begin with the raw amino-acid sequence, 289 residues long: Inorganic pyrophosphatase (289 aa).

Serine 2 carries the post-translational modification N-acetylserine. Lysine 57 carries the N6-acetyllysine modification. 3 residues coordinate Mg(2+): aspartate 116, aspartate 121, and aspartate 153. Lysine 228 bears the N6-acetyllysine mark. Residue serine 250 is modified to Phosphoserine.

The protein belongs to the PPase family. In terms of assembly, homodimer. The cofactor is Mg(2+).

It localises to the cytoplasm. The catalysed reaction is diphosphate + H2O = 2 phosphate + H(+). This is Inorganic pyrophosphatase (PPA1) from Pongo abelii (Sumatran orangutan).